We begin with the raw amino-acid sequence, 61 residues long: Small ribosomal subunit protein uS14 (61 aa).

Residues Cys-24, Cys-27, Cys-40, and Cys-43 each contribute to the Zn(2+) site.

The protein belongs to the universal ribosomal protein uS14 family. Zinc-binding uS14 subfamily. In terms of assembly, part of the 30S ribosomal subunit. Contacts proteins S3 and S10. Zn(2+) serves as cofactor.

Functionally, binds 16S rRNA, required for the assembly of 30S particles and may also be responsible for determining the conformation of the 16S rRNA at the A site. The chain is Small ribosomal subunit protein uS14 from Mycoplasma pneumoniae (strain ATCC 29342 / M129 / Subtype 1) (Mycoplasmoides pneumoniae).